Here is a 203-residue protein sequence, read N- to C-terminus: Small ribosomal subunit protein uS4 (203 aa).

The 81-residue stretch at 93-173 folds into the S4 RNA-binding domain; sequence RRLDNVVFRS…FPSWIQVDKA (81 aa).

Belongs to the universal ribosomal protein uS4 family. In terms of assembly, part of the 30S ribosomal subunit. Contacts protein S5. The interaction surface between S4 and S5 is involved in control of translational fidelity.

In terms of biological role, one of the primary rRNA binding proteins, it binds directly to 16S rRNA where it nucleates assembly of the body of the 30S subunit. Functionally, with S5 and S12 plays an important role in translational accuracy. In Chlorobium limicola (strain DSM 245 / NBRC 103803 / 6330), this protein is Small ribosomal subunit protein uS4.